Reading from the N-terminus, the 806-residue chain is Phenylalanine--tRNA ligase beta subunit (806 aa).

One can recognise a tRNA-binding domain in the interval 40-155 (NKGVKGVVVG…SDAEVGADAL (116 aa)). The B5 domain occupies 409-484 (VQERTVSVTA…RLYGYDHIPV (76 aa)). Asp462, Asp468, Glu471, and Glu472 together coordinate Mg(2+). Positions 712 to 805 (PRFPSMTRDM…VEEKFGAELR (94 aa)) constitute an FDX-ACB domain.

It belongs to the phenylalanyl-tRNA synthetase beta subunit family. Type 1 subfamily. As to quaternary structure, tetramer of two alpha and two beta subunits. Mg(2+) is required as a cofactor.

Its subcellular location is the cytoplasm. It catalyses the reaction tRNA(Phe) + L-phenylalanine + ATP = L-phenylalanyl-tRNA(Phe) + AMP + diphosphate + H(+). This Bacillus cereus (strain ATCC 14579 / DSM 31 / CCUG 7414 / JCM 2152 / NBRC 15305 / NCIMB 9373 / NCTC 2599 / NRRL B-3711) protein is Phenylalanine--tRNA ligase beta subunit.